Here is a 215-residue protein sequence, read N- to C-terminus: Cytochrome b6 (215 aa).

Residues 32-52 form a helical membrane-spanning segment; the sequence is IFYCLGGVTLICFLVQFATGF. C35 is a binding site for heme c. 2 residues coordinate heme b: H86 and H100. A run of 3 helical transmembrane segments spans residues 90–110, 116–136, and 186–206; these read ASMM…TGGF, LTWV…VTGY, and AHTF…FLMI. Positions 187 and 202 each coordinate heme b.

Belongs to the cytochrome b family. PetB subfamily. As to quaternary structure, the 4 large subunits of the cytochrome b6-f complex are cytochrome b6, subunit IV (17 kDa polypeptide, PetD), cytochrome f and the Rieske protein, while the 4 small subunits are PetG, PetL, PetM and PetN. The complex functions as a dimer. Heme b serves as cofactor. The cofactor is heme c.

Its subcellular location is the cell inner membrane. Component of the cytochrome b6-f complex, which mediates electron transfer between photosystem II (PSII) and photosystem I (PSI), cyclic electron flow around PSI, and state transitions. The sequence is that of Cytochrome b6 from Gloeobacter violaceus (strain ATCC 29082 / PCC 7421).